A 1394-amino-acid polypeptide reads, in one-letter code: Tubulin glycylase 3E (1394 aa).

Disordered regions lie at residues 201–230 (KKKSNFQNKSQSQLNNHKNEEKKPSQQRKE), 563–582 (NQKDLQSNQTSSVISQQNSI), 620–663 (DENE…TSNF), and 682–706 (STVKNSDNNNQNQTNPQNQNTNLKE). Positions 205-216 (NFQNKSQSQLNN) are enriched in low complexity. Basic and acidic residues predominate over residues 217 to 230 (HKNEEKKPSQQRKE). The segment covering 568–582 (QSNQTSSVISQQNSI) has biased composition (low complexity). A compositionally biased stretch (polar residues) spans 627–655 (KENVLQQKKNQSNQIVTSQQQSNNYFKQE). Residues 682-703 (STVKNSDNNNQNQTNPQNQNTN) show a composition bias toward low complexity. Residues 911 to 1250 (RFIFNITVIA…QNNLQEDLEI (340 aa)) enclose the TTL domain. Residues 1058–1061 (QKYI), lysine 1079, and aspartate 1081 contribute to the ATP site. 2 IQ domains span residues 1320–1349 (QYWGAIKIQSKIRSFLAKKKLQRLKNQKFT) and 1348–1377 (FTFAAIKIQQKMRQFLAKKQLNILKKQQQT).

The protein localises to the cell projection. It is found in the cilium. It localises to the cytoplasm. Its subcellular location is the cytoskeleton. The protein resides in the cilium axoneme. Its function is as follows. Probable glycylase which modifies tubulin, generating side chains of glycine on the gamma-carboxyl groups of specific glutamate residues within the C-terminal tail of tubulin. This chain is Tubulin glycylase 3E (TTLL3E), found in Tetrahymena thermophila (strain SB210).